The primary structure comprises 724 residues: MPLAQLKEPWPLMELVPLDPENGQTSGEEAGLQPSKDEAILKEISITHHVKAGSEKADPSQFELLKVLGQGSFGKVFLVRKVTRPDSGHLYAMKVLKKATLKVRDRVRTKMERDILADVNHPFVVKLHYAFQTEGKLYLILDFLRGGDLFTRLSKEVMFTEEDVKFYLAELALGLDHLHSLGIIYRDLKPENILLDEEGHIKLTDFGLSKEAIDHEKKAYSFCGTVEYMAPEVVNRQGHTHSADWWSYGVLMGKDRKETMTLILKAKLGMPQFLSTEAQSLLRALFKRNPANRLGSGPDGAEEIKRHIFYSTIDWNKLYRREIKPPFKPAVAQPDDTFYFDTEFTSRTPRDSPGIPPSAGAHQLFRGFSFVATGLMEDDGKPRTTQAPLHSVVQQLHGKNLVFSDGYVVKETIGVGSYSVCKRCVHKATNMEYAVKVIDKSKRDPSEEIEILLRYGQHPNIITLKDVYDDGKHVYLVTELMRGGELLDKILRQKFFSEREASFVLHTISKTVEYLHSQGVVHRDLKPSNILYVDESGNPECLRICDFGFAKQLRAENGLLMTPCYTANFVAPEVLKRQGYDEGCDIWSLGILLYTMLAGYTPFANGPSDTPEEILTRIGSGKFTLSGGNWNTVSETAKDLVSKMLHVDPHQRLTAKQVLQHPWITQKDKLPQSQLSHQDLQLVKGAMAATYSALNSSKPTPQLKPIESSILAQRRVRKLPSTTL.

Ser-54 is subject to Phosphoserine. The region spanning 62 to 310 is the Protein kinase 1 domain; the sequence is FELLKVLGQG…AEEIKRHIFY (249 aa). ATP-binding positions include 68–76 and Lys-94; that span reads LGQGSFGKV. Asp-187 (proton acceptor) is an active-site residue. At Ser-221 the chain carries Phosphoserine; by PDPK1. Ser-296 is modified (phosphoserine). In terms of domain architecture, AGC-kinase C-terminal spans 311–380; that stretch reads STIDWNKLYR…VATGLMEDDG (70 aa). Thr-348 carries the post-translational modification Phosphothreonine. Ser-352, Ser-358, and Ser-369 each carry phosphoserine. One can recognise a Protein kinase 2 domain in the interval 407-664; that stretch reads YVVKETIGVG…AKQVLQHPWI (258 aa). ATP is bound by residues 413–421 and Lys-436; that span reads IGVGSYSVC. Residue Asp-524 is the Proton acceptor of the active site. At Thr-562 the chain carries Phosphothreonine. A Phosphoserine modification is found at Ser-721.

It belongs to the protein kinase superfamily. AGC Ser/Thr protein kinase family. S6 kinase subfamily. Forms a complex with either MAPK1/ERK2 or MAPK3/ERK1 in quiescent cells. Transiently dissociates following mitogenic stimulation. Interacts with ETV1/ER81 and FGFR1. The cofactor is Mg(2+). Activated by phosphorylation at Ser-221 by PDPK1. Autophosphorylated on Ser-369, as part of the activation process. May be phosphorylated at Thr-348 and Ser-352 by MAPK1/ERK2 and MAPK3/ERK1. Post-translationally, N-terminal myristoylation results in an activated kinase in the absence of added growth factors. Intestine, thymus, and lung.

The protein resides in the nucleus. The protein localises to the cytoplasm. It carries out the reaction L-seryl-[protein] + ATP = O-phospho-L-seryl-[protein] + ADP + H(+). It catalyses the reaction L-threonyl-[protein] + ATP = O-phospho-L-threonyl-[protein] + ADP + H(+). Its activity is regulated as follows. Upon extracellular signal or mitogen stimulation, phosphorylated at Thr-562 in the C-terminal kinase domain (CTKD) by MAPK1/ERK2 and MAPK3/ERK1. The activated CTKD then autophosphorylates Ser-369, allowing binding of PDPK1, which in turn phosphorylates Ser-221 in the N-terminal kinase domain (NTDK) leading to the full activation of the protein and subsequent phosphorylation of the substrates by the NTKD. In terms of biological role, serine/threonine-protein kinase that acts downstream of ERK (MAPK1/ERK2 and MAPK3/ERK1) signaling and mediates mitogenic and stress-induced activation of the transcription factors CREB1, ETV1/ER81 and NR4A1/NUR77, regulates translation through RPS6 and EIF4B phosphorylation, and mediates cellular proliferation, survival, and differentiation by modulating mTOR signaling and repressing pro-apoptotic function of BAD and DAPK1. In fibroblast, is required for EGF-stimulated phosphorylation of CREB1, which results in the subsequent transcriptional activation of several immediate-early genes. In response to mitogenic stimulation (EGF and PMA), phosphorylates and activates NR4A1/NUR77 and ETV1/ER81 transcription factors and the cofactor CREBBP. Upon insulin-derived signal, acts indirectly on the transcription regulation of several genes by phosphorylating GSK3B at 'Ser-9' and inhibiting its activity. Phosphorylates RPS6 in response to serum or EGF via an mTOR-independent mechanism and promotes translation initiation by facilitating assembly of the pre-initiation complex. In response to insulin, phosphorylates EIF4B, enhancing EIF4B affinity for the EIF3 complex and stimulating cap-dependent translation. Is involved in the mTOR nutrient-sensing pathway by directly phosphorylating TSC2 at 'Ser-1798', which potently inhibits TSC2 ability to suppress mTOR signaling, and mediates phosphorylation of RPTOR, which regulates mTORC1 activity and may promote rapamycin-sensitive signaling independently of the PI3K/AKT pathway. Also involved in feedback regulation of mTORC1 and mTORC2 by phosphorylating DEPTOR. Mediates cell survival by phosphorylating the pro-apoptotic proteins BAD and DAPK1 and suppressing their pro-apoptotic function. Promotes the survival of hepatic stellate cells by phosphorylating CEBPB in response to the hepatotoxin carbon tetrachloride (CCl4). Mediates induction of hepatocyte prolifration by TGFA through phosphorylation of CEBPB. Is involved in cell cycle regulation by phosphorylating the CDK inhibitor CDKN1B, which promotes CDKN1B association with 14-3-3 proteins and prevents its translocation to the nucleus and inhibition of G1 progression. Phosphorylates EPHA2 at 'Ser-897', the RPS6KA-EPHA2 signaling pathway controls cell migration. In response to mTORC1 activation, phosphorylates EIF4B at 'Ser-406' and 'Ser-422' which stimulates bicarbonate cotransporter SLC4A7 mRNA translation, increasing SLC4A7 protein abundance and function. This Mus musculus (Mouse) protein is Ribosomal protein S6 kinase alpha-1 (Rps6ka1).